The following is a 333-amino-acid chain: Fructose-1,6-bisphosphatase class 1 1 (333 aa).

E81, D100, L102, and D103 together coordinate Mg(2+). Substrate is bound by residues 103 to 106 and N191; that span reads DGSS. E263 lines the Mg(2+) pocket.

It belongs to the FBPase class 1 family. As to quaternary structure, homotetramer. Mg(2+) serves as cofactor.

It localises to the cytoplasm. It catalyses the reaction beta-D-fructose 1,6-bisphosphate + H2O = beta-D-fructose 6-phosphate + phosphate. Its pathway is carbohydrate biosynthesis; Calvin cycle. In Cereibacter sphaeroides (strain ATCC 17025 / ATH 2.4.3) (Rhodobacter sphaeroides), this protein is Fructose-1,6-bisphosphatase class 1 1.